Reading from the N-terminus, the 188-residue chain is Xanthine phosphoribosyltransferase (188 aa).

Xanthine is bound by residues L20 and N27. Residue 127–131 participates in 5-phospho-alpha-D-ribose 1-diphosphate binding; sequence ANGNA. K155 is a xanthine binding site.

The protein belongs to the purine/pyrimidine phosphoribosyltransferase family. Xpt subfamily. Homodimer.

Its subcellular location is the cytoplasm. The enzyme catalyses XMP + diphosphate = xanthine + 5-phospho-alpha-D-ribose 1-diphosphate. Its pathway is purine metabolism; XMP biosynthesis via salvage pathway; XMP from xanthine: step 1/1. Converts the preformed base xanthine, a product of nucleic acid breakdown, to xanthosine 5'-monophosphate (XMP), so it can be reused for RNA or DNA synthesis. This is Xanthine phosphoribosyltransferase from Phocaeicola vulgatus (strain ATCC 8482 / DSM 1447 / JCM 5826 / CCUG 4940 / NBRC 14291 / NCTC 11154) (Bacteroides vulgatus).